The sequence spans 513 residues: Homeobox and leucine zipper protein Homez (513 aa).

Residues 31 to 90 (WTQAVQTSELDGNEHLLQAFSYFPYPSLADIALLCLRHGLQMEKVKTWFMAQRLRCGISW) constitute a DNA-binding region (homeobox 1). Residues K156, K174, and K176 each participate in a glycyl lysine isopeptide (Lys-Gly) (interchain with G-Cter in SUMO2) cross-link. Disordered stretches follow at residues 200–221 (LSKE…ASWN), 241–287 (SCKE…SFSP), 303–328 (RLRN…HQRK), 402–429 (PAIS…PPPD), and 480–513 (LDEE…IIRD). Over residues 205–217 (AGGGPDQSCGGGT) the composition is skewed to gly residues. Residues 248 to 260 (PSGTPPSSSASSP) show a composition bias toward low complexity. S320 carries the post-translational modification Phosphoserine. DNA-binding regions (homeobox) lie at residues 324 to 384 (QHQR…KHGQ) and 418 to 477 (TPPL…AEVV). The Nuclear localization signal motif lies at 327–332 (RKTKRK). T418 is modified (phosphothreonine). A compositionally biased stretch (pro residues) spans 419–429 (PPLPAPPPPPD).

Homodimer or heterodimer (Potential). Interacts with HOXC8.

Its subcellular location is the nucleus. Functionally, may function as a transcriptional regulator. This Rattus norvegicus (Rat) protein is Homeobox and leucine zipper protein Homez (Homez).